Here is a 255-residue protein sequence, read N- to C-terminus: NAD kinase (255 aa).

Asp44 serves as the catalytic Proton acceptor. NAD(+)-binding positions include 44-45 (DG), His49, 114-115 (NE), Asp144, Ala152, 155-160 (SAYNLS), and Gln216.

It belongs to the NAD kinase family. It depends on a divalent metal cation as a cofactor.

It localises to the cytoplasm. It carries out the reaction NAD(+) + ATP = ADP + NADP(+) + H(+). In terms of biological role, involved in the regulation of the intracellular balance of NAD and NADP, and is a key enzyme in the biosynthesis of NADP. Catalyzes specifically the phosphorylation on 2'-hydroxyl of the adenosine moiety of NAD to yield NADP. The sequence is that of NAD kinase from Rickettsia felis (strain ATCC VR-1525 / URRWXCal2) (Rickettsia azadi).